The primary structure comprises 390 residues: Transforming growth factor beta-1 proprotein (390 aa).

The signal sequence occupies residues 1–29 (MPPSGLRLLPLLLPLLWLLMLTPGRPVAG). Residues 30–74 (LSTCKTIDMELVKRKRIEAIRGQILSKLRLASPPSQGDVPPGPLP) are straightjacket domain. The arm domain stretch occupies residues 75-271 (EAILALYNST…ATPLERAQHL (197 aa)). 3 N-linked (GlcNAc...) asparagine glycosylation sites follow: Asn-82, Asn-136, and Asn-176. A bowtie tail region spans residues 226–252 (DSKDNTLQVDINGFSSGRRGDLATIHG). The Cell attachment site signature appears at 244-246 (RGD). 4 disulfide bridges follow: Cys-285–Cys-294, Cys-293–Cys-356, Cys-322–Cys-387, and Cys-326–Cys-389.

Belongs to the TGF-beta family. In terms of assembly, homodimer; disulfide-linked. Interacts with the serine proteases, HTRA1 and HTRA3: the interaction with either inhibits TGFB1-mediated signaling and the HTRA protease activity is required for this inhibition. May interact with THSD4; this interaction may lead to sequestration by FBN1 microfibril assembly and attenuation of TGFB signaling. Interacts with CD109, DPT and ASPN. Interacts with EFEMP2. Interacts with TSKU; the interaction contributes to regulation of the hair cycle. Interacts with TGFBR3. As to quaternary structure, homodimer; disulfide-linked. Interacts with transforming growth factor beta-1 (TGF-beta-1) chain; interaction is non-covalent and maintains TGF-beta-1 in a latent state; each latency-associated peptide (LAP) monomer interacts with TGF-beta-1 in the other monomer. Interacts with LTBP1; leading to regulation of TGF-beta-1 activation. Interacts with LRRC32/GARP; leading to regulation of TGF-beta-1 activation on the surface of activated regulatory T-cells (Tregs). Interacts with LRRC33/NRROS; leading to regulation of TGF-beta-1 activation in macrophages and microglia. Interacts (via cell attachment site) with integrins ITGAV and ITGB6 (ITGAV:ITGB6), leading to release of the active TGF-beta-1. Interacts with NREP; the interaction results in a decrease in TGFB1 autoinduction. Interacts with HSP90AB1; inhibits latent TGFB1 activation. Homodimer; disulfide-linked. Interacts with TGF-beta receptors (TGFBR1 and TGFBR2), leading to signal transduction. Interacts with EFEMP2. Post-translationally, transforming growth factor beta-1 proprotein: The precursor proprotein is cleaved in the Golgi apparatus by FURIN to form Transforming growth factor beta-1 (TGF-beta-1) and Latency-associated peptide (LAP) chains, which remain non-covalently linked, rendering TGF-beta-1 inactive. N-glycosylated. Deglycosylation leads to activation of Transforming growth factor beta-1 (TGF-beta-1); mechanisms triggering deglycosylation-driven activation of TGF-beta-1 are however unclear.

Its subcellular location is the secreted. It localises to the extracellular space. The protein resides in the extracellular matrix. In terms of biological role, transforming growth factor beta-1 proprotein: Precursor of the Latency-associated peptide (LAP) and Transforming growth factor beta-1 (TGF-beta-1) chains, which constitute the regulatory and active subunit of TGF-beta-1, respectively. Required to maintain the Transforming growth factor beta-1 (TGF-beta-1) chain in a latent state during storage in extracellular matrix. Associates non-covalently with TGF-beta-1 and regulates its activation via interaction with 'milieu molecules', such as LTBP1, LRRC32/GARP and LRRC33/NRROS, that control activation of TGF-beta-1. Interaction with LRRC33/NRROS regulates activation of TGF-beta-1 in macrophages and microglia. Interaction with LRRC32/GARP controls activation of TGF-beta-1 on the surface of activated regulatory T-cells (Tregs). Interaction with integrins (ITGAV:ITGB6 or ITGAV:ITGB8) results in distortion of the Latency-associated peptide chain and subsequent release of the active TGF-beta-1. Functionally, multifunctional protein that regulates the growth and differentiation of various cell types and is involved in various processes, such as normal development, immune function, microglia function and responses to neurodegeneration. Activation into mature form follows different steps: following cleavage of the proprotein in the Golgi apparatus, Latency-associated peptide (LAP) and Transforming growth factor beta-1 (TGF-beta-1) chains remain non-covalently linked rendering TGF-beta-1 inactive during storage in extracellular matrix. At the same time, LAP chain interacts with 'milieu molecules', such as LTBP1, LRRC32/GARP and LRRC33/NRROS that control activation of TGF-beta-1 and maintain it in a latent state during storage in extracellular milieus. TGF-beta-1 is released from LAP by integrins (ITGAV:ITGB6 or ITGAV:ITGB8): integrin-binding to LAP stabilizes an alternative conformation of the LAP bowtie tail and results in distortion of the LAP chain and subsequent release of the active TGF-beta-1. Once activated following release of LAP, TGF-beta-1 acts by binding to TGF-beta receptors (TGFBR1 and TGFBR2), which transduce signal. While expressed by many cells types, TGF-beta-1 only has a very localized range of action within cell environment thanks to fine regulation of its activation by Latency-associated peptide chain (LAP) and 'milieu molecules'. Plays an important role in bone remodeling: acts as a potent stimulator of osteoblastic bone formation, causing chemotaxis, proliferation and differentiation in committed osteoblasts. Can promote either T-helper 17 cells (Th17) or regulatory T-cells (Treg) lineage differentiation in a concentration-dependent manner. At high concentrations, leads to FOXP3-mediated suppression of RORC and down-regulation of IL-17 expression, favoring Treg cell development. At low concentrations in concert with IL-6 and IL-21, leads to expression of the IL-17 and IL-23 receptors, favoring differentiation to Th17 cells. Stimulates sustained production of collagen through the activation of CREB3L1 by regulated intramembrane proteolysis (RIP). Mediates SMAD2/3 activation by inducing its phosphorylation and subsequent translocation to the nucleus. Positively regulates odontoblastic differentiation in dental papilla cells, via promotion of IPO7-mediated translocation of phosphorylated SMAD2 to the nucleus and subsequent transcription of target genes. Can induce epithelial-to-mesenchymal transition (EMT) and cell migration in various cell types. The polypeptide is Transforming growth factor beta-1 proprotein (TGFB1) (Bos taurus (Bovine)).